The sequence spans 223 residues: RNA polymerase sigma-H factor (223 aa).

A Polymerase core binding motif is present at residues 67-80; sequence DIVQEGMIGLYKSI. The H-T-H motif DNA-binding region spans 187-206; that stretch reads YQEISEELNRHVKSIDNALQ.

Belongs to the sigma-70 factor family.

Its function is as follows. Sigma factors are initiation factors that promote the attachment of RNA polymerase to specific initiation sites and are then released. This sigma factor is involved in the transition to post-exponential phase in the beginning of sporulation. The chain is RNA polymerase sigma-H factor (sigH) from Bacillus licheniformis.